The primary structure comprises 202 residues: Imidazoleglycerol-phosphate dehydratase (202 aa).

Belongs to the imidazoleglycerol-phosphate dehydratase family.

Its subcellular location is the cytoplasm. The enzyme catalyses D-erythro-1-(imidazol-4-yl)glycerol 3-phosphate = 3-(imidazol-4-yl)-2-oxopropyl phosphate + H2O. Its pathway is amino-acid biosynthesis; L-histidine biosynthesis; L-histidine from 5-phospho-alpha-D-ribose 1-diphosphate: step 6/9. The protein is Imidazoleglycerol-phosphate dehydratase of Acinetobacter baumannii (strain AYE).